The chain runs to 626 residues: Pheromone B alpha 3 receptor (626 aa).

The next 7 membrane-spanning stretches (helical) occupy residues 8–28 (LFPT…PWHL), 36–56 (CFFM…SIVW), 70–90 (ISIR…LCII), 113–133 (IIID…MQYI), 163–183 (IWPV…LIEF), 208–228 (LMAL…FVIV), and 271–291 (ELTR…FGFA). Disordered stretches follow at residues 363–409 (KQYT…SSPI), 481–509 (ATFT…SSSA), 524–549 (STTD…RLPS), and 571–626 (QDVA…RASV). The segment covering 376 to 391 (SSSGFSSSESTRFGSS) has biased composition (low complexity). The span at 574–606 (ATGTAAPTTTAPAPASTTIAPATTTATAPTTTA) shows a compositional bias: low complexity.

The protein belongs to the G-protein coupled receptor 4 family.

The protein localises to the membrane. Functionally, receptor for the BAP3 pheromone, a prenylated mating factor. This chain is Pheromone B alpha 3 receptor (BAR3), found in Schizophyllum commune (strain H4-8 / FGSC 9210) (Split gill fungus).